The primary structure comprises 369 residues: Mitogen-activated protein kinase 4 (369 aa).

The Protein kinase domain occupies 32 to 319; the sequence is YVPIKPIGRG…VTEALEHPYM (288 aa). Residues 38–46 and K61 contribute to the ATP site; that span reads IGRGAYGIV. D158 acts as the Proton acceptor in catalysis. Position 191 is a phosphothreonine (T191). A TXY motif is present at residues 191-193; it reads TEY. Y193 bears the Phosphotyrosine mark.

This sequence belongs to the protein kinase superfamily. CMGC Ser/Thr protein kinase family. MAP kinase subfamily. Dually phosphorylated on Thr-191 and Tyr-193, which activates the enzyme. As to expression, expressed in leaves and panicles.

The enzyme catalyses L-seryl-[protein] + ATP = O-phospho-L-seryl-[protein] + ADP + H(+). It carries out the reaction L-threonyl-[protein] + ATP = O-phospho-L-threonyl-[protein] + ADP + H(+). Its activity is regulated as follows. Activated by threonine and tyrosine phosphorylation. In Oryza sativa subsp. japonica (Rice), this protein is Mitogen-activated protein kinase 4 (MPK4).